A 464-amino-acid polypeptide reads, in one-letter code: tRNA modification GTPase MnmE (464 aa).

(6S)-5-formyl-5,6,7,8-tetrahydrofolate contacts are provided by arginine 27, glutamate 90, and lysine 129. The TrmE-type G domain maps to glycine 222 to serine 384. GTP-binding positions include asparagine 232–serine 237, serine 251–threonine 257, and aspartate 276–glycine 279. Positions 236 and 257 each coordinate Mg(2+). Lysine 464 serves as a coordination point for (6S)-5-formyl-5,6,7,8-tetrahydrofolate.

Belongs to the TRAFAC class TrmE-Era-EngA-EngB-Septin-like GTPase superfamily. TrmE GTPase family. Homodimer. Heterotetramer of two MnmE and two MnmG subunits. K(+) is required as a cofactor.

Its subcellular location is the cytoplasm. Functionally, exhibits a very high intrinsic GTPase hydrolysis rate. Involved in the addition of a carboxymethylaminomethyl (cmnm) group at the wobble position (U34) of certain tRNAs, forming tRNA-cmnm(5)s(2)U34. The polypeptide is tRNA modification GTPase MnmE (Borreliella burgdorferi (strain ATCC 35210 / DSM 4680 / CIP 102532 / B31) (Borrelia burgdorferi)).